The sequence spans 260 residues: Ribonuclease HII (260 aa).

One can recognise an RNase H type-2 domain in the interval 71–259 (ELVAGVDEVG…VHDAIVNKKN (189 aa)). The a divalent metal cation site is built by aspartate 77, glutamate 78, and aspartate 169.

The protein belongs to the RNase HII family. Requires Mn(2+) as cofactor. The cofactor is Mg(2+).

It is found in the cytoplasm. The catalysed reaction is Endonucleolytic cleavage to 5'-phosphomonoester.. In terms of biological role, endonuclease that specifically degrades the RNA of RNA-DNA hybrids. The polypeptide is Ribonuclease HII (Leuconostoc citreum (strain KM20)).